The sequence spans 159 residues: Ribosomal RNA large subunit methyltransferase H (159 aa).

Residues leucine 76 and glycine 108 each contribute to the S-adenosyl-L-methionine site.

The protein belongs to the RNA methyltransferase RlmH family. Homodimer.

It is found in the cytoplasm. It catalyses the reaction pseudouridine(1915) in 23S rRNA + S-adenosyl-L-methionine = N(3)-methylpseudouridine(1915) in 23S rRNA + S-adenosyl-L-homocysteine + H(+). Its function is as follows. Specifically methylates the pseudouridine at position 1915 (m3Psi1915) in 23S rRNA. The polypeptide is Ribosomal RNA large subunit methyltransferase H (Ligilactobacillus salivarius (strain UCC118) (Lactobacillus salivarius)).